Reading from the N-terminus, the 999-residue chain is Tyrosine-protein kinase Mer (999 aa).

Residues 1-20 (MGPAPLPLLLGLFLPALWRR) form the signal peptide. Topologically, residues 21–505 (AITEAREEAK…PGNADPVLII (485 aa)) are extracellular. Ig-like C2-type domains follow at residues 81–186 (PQVT…EIVS) and 197–273 (PHFT…LTVS). N114, N170, N207, N215, N234, N294, N316, N329, N336, N354, N389, N395, N442, and N454 each carry an N-linked (GlcNAc...) asparagine glycan. C115 and C175 are joined by a disulfide. Residues C218 and C262 are joined by a disulfide bond. Fibronectin type-III domains follow at residues 286–381 (PPTE…TTEG) and 386–484 (APLN…PAHG). The helical transmembrane segment at 506 to 526 (FGCFCGFILIGLILYISLAIR) threads the bilayer. Residues 527 to 999 (KRVQETKFGN…DSSEGSEVLM (473 aa)) lie on the Cytoplasmic side of the membrane. S543 carries the phosphoserine modification. A Protein kinase domain is found at 587–858 (LILGKILGEG…VLRLQLEKLL (272 aa)). ATP contacts are provided by residues 593-601 (LGEGEFGSV) and K615. The active-site Proton acceptor is D723. 4 positions are modified to phosphotyrosine; by autocatalysis: Y749, Y753, Y754, and Y872. The residue at position 935 (S935) is a Phosphoserine.

This sequence belongs to the protein kinase superfamily. Tyr protein kinase family. AXL/UFO subfamily. In terms of assembly, interacts (upon activation) with TNK2; stimulates TNK2 autophosphorylation. Interacts (via N-terminus) with extracellular ligands LGALS3, TUB, TULP1 and GAS6. Interacts with VAV1 in a phosphotyrosine-independent manner. Interacts with TIMD4; this interaction enhances TIMD4-mediated efferocytosis. Post-translationally, autophosphorylated on Tyr-749, Tyr-753 and Tyr-754 in the activation loop allowing full activity. Autophosphorylated on Tyr-872 leading to recruitment of downstream partners of the signaling cascade such as PLCG2. Not expressed in normal B- and T-lymphocytes but is expressed in numerous neoplastic B- and T-cell lines. Highly expressed in testis, ovary, prostate, lung, and kidney, with lower expression in spleen, small intestine, colon, and liver.

The protein resides in the cell membrane. The enzyme catalyses L-tyrosyl-[protein] + ATP = O-phospho-L-tyrosyl-[protein] + ADP + H(+). In terms of biological role, receptor tyrosine kinase that transduces signals from the extracellular matrix into the cytoplasm by binding to several ligands including LGALS3, TUB, TULP1 or GAS6. Regulates many physiological processes including cell survival, migration, differentiation, and phagocytosis of apoptotic cells (efferocytosis). Ligand binding at the cell surface induces autophosphorylation of MERTK on its intracellular domain that provides docking sites for downstream signaling molecules. Following activation by ligand, interacts with GRB2 or PLCG2 and induces phosphorylation of MAPK1, MAPK2, FAK/PTK2 or RAC1. MERTK signaling plays a role in various processes such as macrophage clearance of apoptotic cells, platelet aggregation, cytoskeleton reorganization and engulfment. Functions in the retinal pigment epithelium (RPE) as a regulator of rod outer segments fragments phagocytosis. Also plays an important role in inhibition of Toll-like receptors (TLRs)-mediated innate immune response by activating STAT1, which selectively induces production of suppressors of cytokine signaling SOCS1 and SOCS3. This chain is Tyrosine-protein kinase Mer (MERTK), found in Homo sapiens (Human).